Reading from the N-terminus, the 446-residue chain is MSAPAVSQGRNVVVIGTQWGDEGKGKIVDWLTDHAQGVVRFQGGHNAGHTLIIGGKKTILRLIPSGIMRDGVACYIGNGVVLSPEALFKEIDELESAGVQVQNRLRISEATNLILPYHVAIDKAREAKRGAAKIGTTGRGIGPAYEDKVARRGLRVQDLFDPAYFAERLRENLDFHNFVLTQYLNHPALDFQQTLDEMLSYAGRLAPMVTDVSAELFAANAAGKNLMFEGAQGTLLDIDHGTYPFVTSSNCVAGNAAAGAGVGPGQLHYILGITKAYCTRVGSGPFPSELYDADNPARQDPIGVRLANVGKEFGSVTGRPRRTGWLDAAALRRAIQINGVSGLCMTKLDVLDGLETLKLCVGYMLDGKQIDILPRGSDAVARCQPIYEEFPGWNTSTFGLKEWDALPQTAQAYLKRVEEVAGIPIAMISTGPDRDETILLRHPYKD.

Residues 20–26 (GDEGKGK) and 48–50 (GHT) each bind GTP. Asp21 functions as the Proton acceptor in the catalytic mechanism. The Mg(2+) site is built by Asp21 and Gly48. Residues 21–24 (DEGK), 46–49 (NAGH), Thr137, Arg151, Gln232, Thr247, and Arg319 each bind IMP. Residue His49 is the Proton donor of the active site. 315 to 321 (SVTGRPR) lines the substrate pocket. GTP-binding positions include Arg321, 347 to 349 (KLD), and 429 to 431 (STG).

The protein belongs to the adenylosuccinate synthetase family. As to quaternary structure, homodimer. Mg(2+) serves as cofactor.

The protein resides in the cytoplasm. It catalyses the reaction IMP + L-aspartate + GTP = N(6)-(1,2-dicarboxyethyl)-AMP + GDP + phosphate + 2 H(+). The protein operates within purine metabolism; AMP biosynthesis via de novo pathway; AMP from IMP: step 1/2. Its function is as follows. Plays an important role in the de novo pathway of purine nucleotide biosynthesis. Catalyzes the first committed step in the biosynthesis of AMP from IMP. In Ralstonia pickettii (strain 12J), this protein is Adenylosuccinate synthetase.